The following is a 104-amino-acid chain: UPF0212 protein PH1312 (104 aa).

The protein belongs to the UPF0212 family.

This chain is UPF0212 protein PH1312, found in Pyrococcus horikoshii (strain ATCC 700860 / DSM 12428 / JCM 9974 / NBRC 100139 / OT-3).